Here is a 738-residue protein sequence, read N- to C-terminus: 1,4-alpha-glucan branching enzyme GlgB (738 aa).

Asp-399 serves as the catalytic Nucleophile. The Proton donor role is filled by Glu-452.

It belongs to the glycosyl hydrolase 13 family. GlgB subfamily. As to quaternary structure, monomer.

It catalyses the reaction Transfers a segment of a (1-&gt;4)-alpha-D-glucan chain to a primary hydroxy group in a similar glucan chain.. The protein operates within glycan biosynthesis; glycogen biosynthesis. Its function is as follows. Catalyzes the formation of the alpha-1,6-glucosidic linkages in glycogen by scission of a 1,4-alpha-linked oligosaccharide from growing alpha-1,4-glucan chains and the subsequent attachment of the oligosaccharide to the alpha-1,6 position. The polypeptide is 1,4-alpha-glucan branching enzyme GlgB (Chlamydia trachomatis serovar L2 (strain ATCC VR-902B / DSM 19102 / 434/Bu)).